A 982-amino-acid chain; its full sequence is Ubiquitin carboxyl-terminal hydrolase 15 (982 aa).

The DUSP domain maps to 7 to 118 (VDLETQRSEV…SQQPIARKVV (112 aa)). The 646-residue stretch at 288–933 (CGLSNLGNTC…AAYVLFYQRQ (646 aa)) folds into the USP domain. Cys-297 acts as the Nucleophile in catalysis. The tract at residues 623–695 (TEENDGSLHC…DNDSENGLCT (73 aa)) is disordered. The span at 655–672 (METDEPDDESSQDQELPS) shows a compositional bias: acidic residues. His-891 functions as the Proton acceptor in the catalytic mechanism. Residues 950 to 982 (QGASAATGAPHESDEESNEDENDIENENCMHTN) are disordered. The span at 962–975 (SDEESNEDENDIEN) shows a compositional bias: acidic residues.

Belongs to the peptidase C19 family.

It localises to the cytoplasm. It is found in the nucleus. The enzyme catalyses Thiol-dependent hydrolysis of ester, thioester, amide, peptide and isopeptide bonds formed by the C-terminal Gly of ubiquitin (a 76-residue protein attached to proteins as an intracellular targeting signal).. In terms of biological role, hydrolase that removes conjugated ubiquitin from target proteins and regulates various pathways such as the TGF-beta receptor signaling and NF-kappa-B pathways. Acts as a key regulator of TGF-beta receptor signaling pathway, but the precise mechanism is still unclear: according to a report, acts by promoting deubiquitination of monoubiquitinated R-SMADs, thereby alleviating inhibition of R-SMADs and promoting activation of TGF-beta target genes. According to another reports, regulates the TGF-beta receptor signaling pathway by mediating deubiquitination and stabilization of tgfbr1, leading to an enhanced TGF-beta signal. May also regulate gene expression and/or DNA repair through the deubiquitination of histone H2B. Involved in endosome organization by mediating deubiquitination of rnf26 target(s), releasing vesicles that are restrained in the perinuclear region. This is Ubiquitin carboxyl-terminal hydrolase 15 (usp15) from Xenopus tropicalis (Western clawed frog).